The chain runs to 123 residues: Large ribosomal subunit protein uL29 (123 aa).

The residue at position 19 (Lys-19) is an N6-acetyllysine. Residue Lys-25 forms a Glycyl lysine isopeptide (Lys-Gly) (interchain with G-Cter in SUMO2) linkage. Ser-29 bears the Phosphoserine mark. The residue at position 43 (Lys-43) is an N6-acetyllysine. The segment at 85 to 123 (PKKTRAMRRRLNKHEESLKTKKQQRKERLYPLRKYAVKA) is disordered. Basic residues predominate over residues 86–96 (KKTRAMRRRLN).

Belongs to the universal ribosomal protein uL29 family. Component of the large ribosomal subunit.

Its subcellular location is the cytoplasm. Functionally, component of the large ribosomal subunit. The ribosome is a large ribonucleoprotein complex responsible for the synthesis of proteins in the cell. The polypeptide is Large ribosomal subunit protein uL29 (RPL35) (Oryctolagus cuniculus (Rabbit)).